A 216-amino-acid chain; its full sequence is Ribosomal RNA small subunit methyltransferase G (216 aa).

S-adenosyl-L-methionine is bound by residues Gly-81, Phe-86, 130 to 131 (AE), and Arg-144.

This sequence belongs to the methyltransferase superfamily. RNA methyltransferase RsmG family.

It is found in the cytoplasm. It catalyses the reaction guanosine(527) in 16S rRNA + S-adenosyl-L-methionine = N(7)-methylguanosine(527) in 16S rRNA + S-adenosyl-L-homocysteine. Functionally, specifically methylates the N7 position of guanine in position 527 of 16S rRNA. This Rhodospirillum centenum (strain ATCC 51521 / SW) protein is Ribosomal RNA small subunit methyltransferase G.